Consider the following 329-residue polypeptide: 1-phosphatidylinositol phosphodiesterase (329 aa).

A signal peptide spans 1 to 31; the sequence is MSNKKLILKLFICSTIFITFVFALHDKRVVA. One can recognise a PI-PLC X-box domain in the interval 51–194; it reads NIPLARISIP…ARGKIVLLKR (144 aa). Catalysis depends on H63, which acts as the Proton acceptor. Residue H113 is the Proton donor of the active site.

The protein resides in the secreted. It carries out the reaction a 1,2-diacyl-sn-glycero-3-phospho-(1D-myo-inositol) = 1D-myo-inositol 1,2-cyclic phosphate + a 1,2-diacyl-sn-glycerol. Cleaves glycosylphosphatidylinositol (GPI) and phosphatidylinositol (PI) anchors but not PI phosphates. This chain is 1-phosphatidylinositol phosphodiesterase, found in Bacillus thuringiensis.